A 221-amino-acid chain; its full sequence is CDC5 pindle pole body anchor protein 1 (221 aa).

The interval 142 to 221 is disordered; the sequence is KNIERDNLKP…PTEDSVPHAE (80 aa). Phosphoserine occurs at positions 158, 170, and 175. The CDC5-binding motif lies at 165 to 170; it reads PLVTSS. A compositionally biased stretch (polar residues) spans 166 to 188; sequence LVTSSPIHMSPLQSRQRPVSSLQ. Residues 189-195 carry the CLB3-docking motif; the sequence is PPKGPNF. The CDC14-binding motif lies at 200–202; that stretch reads PKL.

In terms of assembly, interacts with CDC5 and CDC14. In terms of processing, phosphorylated by CLB3-CDK1 in metaphase which is required for correct localization at the nuclear envelop and the spindle pole body, and dephosphorylated by CDC14 in early anaphase.

The protein resides in the nucleus membrane. The protein localises to the cytoplasm. Its subcellular location is the cytoskeleton. It is found in the microtubule organizing center. It localises to the spindle pole body. In terms of biological role, specialized component of the nuclear membrane that may be involved in the connection of the spindle pole body (SPB) to the nuclear envelope. Recruits CDC5 to spindle pole bodies in metaphase. This Saccharomyces cerevisiae (strain ATCC 204508 / S288c) (Baker's yeast) protein is CDC5 pindle pole body anchor protein 1.